A 979-amino-acid chain; its full sequence is Putative disease resistance protein RGA1 (979 aa).

Residues 143–437 form the NB-ARC domain; it reads GSVLTEPQVY…MAHGFLLSKG (295 aa). 182 to 189 contributes to the ATP binding site; it reads GMGGLGKT. 12 LRR repeats span residues 524–547, 549–570, 571–594, 595–619, 637–661, 748–773, 823–841, 842–866, 868–890, 891–915, 917–939, and 940–965; these read FVSL…IGDL, HLRY…RLCK, LQNL…QTSK, LGSL…GLLT, LGEL…KKDT, LPCL…VHPG, VKTL…SISN, LRAL…MFKS, ANLK…SLAS, LNAL…GVKG, TSLT…GLQH, and LTAL…IGED.

The protein belongs to the disease resistance NB-LRR family.

In terms of biological role, disease resistance protein. Resistance proteins guard the plant against pathogens that contain an appropriate avirulence protein via a direct or indirect interaction with this avirulence protein. That triggers a defense system which restricts the pathogen growth. This Solanum bulbocastanum (Wild potato) protein is Putative disease resistance protein RGA1 (RGA1).